The sequence spans 559 residues: Poly(3-hydroxyalkanoate) polymerase 1 (559 aa).

Residue C296 is part of the active site.

Belongs to the PHA/PHB synthase family. Type II PhaC subfamily.

It participates in biopolymer metabolism; poly-(R)-3-hydroxybutanoate biosynthesis. Functionally, synthesizes poly(3-hydroxyalkanoates) (PHA), complements a mutant of P.putida that does not make PHA. The polypeptide is Poly(3-hydroxyalkanoate) polymerase 1 (Ectopseudomonas oleovorans (Pseudomonas oleovorans)).